The following is a 128-amino-acid chain: Sulfurtransferase TusD (128 aa).

Residue cysteine 78 is the Cysteine persulfide intermediate of the active site.

Belongs to the DsrE/TusD family. In terms of assembly, heterohexamer, formed by a dimer of trimers. The hexameric TusBCD complex contains 2 copies each of TusB, TusC and TusD. The TusBCD complex interacts with TusE.

Its subcellular location is the cytoplasm. Its function is as follows. Part of a sulfur-relay system required for 2-thiolation of 5-methylaminomethyl-2-thiouridine (mnm(5)s(2)U) at tRNA wobble positions. Accepts sulfur from TusA and transfers it in turn to TusE. The chain is Sulfurtransferase TusD from Escherichia coli (strain K12 / MC4100 / BW2952).